A 351-amino-acid chain; its full sequence is Ribosomal RNA small subunit methyltransferase H (351 aa).

S-adenosyl-L-methionine is bound by residues 48–50, Asp-67, Phe-94, Asp-115, and Gln-122; that span reads GGY. A disordered region spans residues 274–351; sequence AAQASRHVPG…PAPQGRGPRR (78 aa).

The protein belongs to the methyltransferase superfamily. RsmH family.

It is found in the cytoplasm. It catalyses the reaction cytidine(1402) in 16S rRNA + S-adenosyl-L-methionine = N(4)-methylcytidine(1402) in 16S rRNA + S-adenosyl-L-homocysteine + H(+). Specifically methylates the N4 position of cytidine in position 1402 (C1402) of 16S rRNA. The chain is Ribosomal RNA small subunit methyltransferase H from Methylorubrum extorquens (strain ATCC 14718 / DSM 1338 / JCM 2805 / NCIMB 9133 / AM1) (Methylobacterium extorquens).